A 347-amino-acid chain; its full sequence is MRIEEGLKLGFKDVLIRPKRSTLKSRSEVALERQFTFKHSGWNWSGVPIIAANMDTVGTFRMAEVLASFDILTAVHKHYTLEQWAEFVKRSPESVLRHVMVSTGTSSADFDKMKQILALSPSLKFICIDVANGYSEHFVSFLQRAREACPDKVICAGNVVTGEMVEELILSGADIVKVGIGPGSVCTTRVKTGVGYPQLSAVIECADAAHGLGGQIVSDGGCSVPGDVAKAFGGGADFVMLGGMLAGHDECEGRVVEENGEKFMLFYGMSSESAMKRHVGGVAQYRAAEGKTVKLPLRGSVDNTVRDIMGGLRSACTYVGASHLKELTKRTTFIRVAEQENRVFGTD.

An NADP(+)-binding site is contributed by 108-131 (ADFDKMKQILALSPSLKFICIDVA). Positions 181 and 183 each coordinate K(+). Residue Cys-186 is the Thioimidate intermediate of the active site. Position 216 to 239 (216 to 239 (IVSDGGCSVPGDVAKAFGGGADFV)) interacts with NADP(+).

It belongs to the IMPDH/GMPR family. GuaC type 1 subfamily. As to quaternary structure, homotetramer.

It carries out the reaction IMP + NH4(+) + NADP(+) = GMP + NADPH + 2 H(+). Functionally, catalyzes the irreversible NADPH-dependent deamination of GMP to IMP. It functions in the conversion of nucleobase, nucleoside and nucleotide derivatives of G to A nucleotides, and in maintaining the intracellular balance of A and G nucleotides. In Yersinia pestis bv. Antiqua (strain Antiqua), this protein is GMP reductase.